The chain runs to 96 residues: Co-chaperonin GroES (96 aa).

This sequence belongs to the GroES chaperonin family. Heptamer of 7 subunits arranged in a ring. Interacts with the chaperonin GroEL.

It is found in the cytoplasm. Together with the chaperonin GroEL, plays an essential role in assisting protein folding. The GroEL-GroES system forms a nano-cage that allows encapsulation of the non-native substrate proteins and provides a physical environment optimized to promote and accelerate protein folding. GroES binds to the apical surface of the GroEL ring, thereby capping the opening of the GroEL channel. This is Co-chaperonin GroES from Delftia acidovorans (strain DSM 14801 / SPH-1).